The primary structure comprises 306 residues: ADP-polyphosphate phosphotransferase 2 (306 aa).

The protein belongs to the polyphosphate kinase 2 (PPK2) family. Class I subfamily.

It carries out the reaction [phosphate](n) + ATP = [phosphate](n+1) + ADP. It catalyses the reaction [phosphate](n) + GTP = [phosphate](n+1) + GDP. In terms of biological role, uses inorganic polyphosphate (polyP) as a donor to convert ADP to ATP. Can also convert GDP to GTP, with lower efficiency. The sequence is that of ADP-polyphosphate phosphotransferase 2 from Rhizobium meliloti (strain 1021) (Ensifer meliloti).